The following is a 291-amino-acid chain: N-acetylmannosamine kinase (291 aa).

ATP is bound by residues 5–12 and 132–139; these read AIDIGGTK and GVGGGVVS. 4 residues coordinate Zn(2+): His-156, Cys-166, Cys-168, and Cys-173.

It belongs to the ROK (NagC/XylR) family. NanK subfamily. Homodimer.

It carries out the reaction an N-acyl-D-mannosamine + ATP = an N-acyl-D-mannosamine 6-phosphate + ADP + H(+). The protein operates within amino-sugar metabolism; N-acetylneuraminate degradation; D-fructose 6-phosphate from N-acetylneuraminate: step 2/5. Functionally, catalyzes the phosphorylation of N-acetylmannosamine (ManNAc) to ManNAc-6-P. This Escherichia coli O6:K15:H31 (strain 536 / UPEC) protein is N-acetylmannosamine kinase.